A 470-amino-acid chain; its full sequence is Fumarate hydratase class II (470 aa).

Substrate-binding positions include 99–101 (SGT), 129–132 (HPND), 139–141 (SSN), and Thr187. The active-site Proton donor/acceptor is His188. Ser318 is an active-site residue. Substrate contacts are provided by residues Ser319 and 324-326 (KIN).

It belongs to the class-II fumarase/aspartase family. Fumarase subfamily. In terms of assembly, homotetramer.

It localises to the cytoplasm. The enzyme catalyses (S)-malate = fumarate + H2O. It participates in carbohydrate metabolism; tricarboxylic acid cycle; (S)-malate from fumarate: step 1/1. Functionally, involved in the TCA cycle. Catalyzes the stereospecific interconversion of fumarate to L-malate. The chain is Fumarate hydratase class II from Halobacterium salinarum (strain ATCC 700922 / JCM 11081 / NRC-1) (Halobacterium halobium).